The following is a 250-amino-acid chain: MLMRQKGIIIKAVDYGESDKIITILNEHGAKVPLMARRAKKVKTGLQAQTQLFVYGLFIYNQWRGMGTLNSVDVISQHYKLQMDLYVSSYASLAAETIERSMDEGDIAPYNYQLLQFVLEKIESGTSAQLMSVVVMLKCMKRFGFTASFNRCAVSGNDTQADLIGYSFKFDGAISRQEASKDVHAVILSNKTLYLLDVLQKLPIDKMNSLNIHQEIIDEMSEIILMLYREYAGMFFKSQKLINQLKRLEQ.

The protein belongs to the RecO family.

Its function is as follows. Involved in DNA repair and RecF pathway recombination. The sequence is that of DNA repair protein RecO from Staphylococcus aureus (strain bovine RF122 / ET3-1).